The sequence spans 514 residues: Alanine--glyoxylate aminotransferase 2, mitochondrial (514 aa).

The N-terminal 41 residues, 1 to 41, are a transit peptide targeting the mitochondrion; sequence MTLIWRHLLRPLCLVTSAPRILEMHPFLSLGTSRTSVTKLS. Position 71 is an N6-acetyllysine; alternate (Lys-71). The residue at position 71 (Lys-71) is an N6-succinyllysine; alternate. Lys-84 carries the post-translational modification N6-acetyllysine. An N6-acetyllysine; alternate modification is found at Lys-262. Lys-262 is subject to N6-succinyllysine; alternate. Position 304 is an N6-succinyllysine (Lys-304). Lys-350 bears the N6-(pyridoxal phosphate)lysine mark. Lys-417 and Lys-420 each carry N6-acetyllysine; alternate. An N6-succinyllysine; alternate mark is found at Lys-417 and Lys-420.

Belongs to the class-III pyridoxal-phosphate-dependent aminotransferase family. In terms of assembly, homotetramer. Pyridoxal 5'-phosphate is required as a cofactor. As to expression, expressed in the convoluted tubule in the kidney and in the liver hepatocytes (at protein level).

The protein localises to the mitochondrion. The catalysed reaction is glyoxylate + L-alanine = glycine + pyruvate. The enzyme catalyses (R)-3-amino-2-methylpropanoate + pyruvate = 2-methyl-3-oxopropanoate + L-alanine. It carries out the reaction 3-oxopropanoate + L-alanine = beta-alanine + pyruvate. It catalyses the reaction 2-oxobutanoate + L-alanine = (2S)-2-aminobutanoate + pyruvate. The catalysed reaction is N(omega),N(omega)-dimethyl-L-arginine + pyruvate = 5-(3,3-dimethylguanidino)-2-oxopentanoate + L-alanine. The enzyme catalyses N(omega),N('omega)-dimethyl-L-arginine + pyruvate = 5-(3,3'-dimethylguanidino)-2-oxopentanoate + L-alanine. It carries out the reaction N(omega),N(omega)-dimethyl-L-arginine + glyoxylate = 5-(3,3-dimethylguanidino)-2-oxopentanoate + glycine. It catalyses the reaction N(omega),N('omega)-dimethyl-L-arginine + glyoxylate = 5-(3,3'-dimethylguanidino)-2-oxopentanoate + glycine. The catalysed reaction is N(omega)-methyl-L-arginine + pyruvate = 5-(3-methylguanidino)-2-oxopentanoate + L-alanine. The enzyme catalyses N(omega)-methyl-L-arginine + glyoxylate = 5-(3-methylguanidino)-2-oxopentanoate + glycine. It carries out the reaction L-ornithine + pyruvate = 5-amino-2-oxopentanoate + L-alanine. It catalyses the reaction L-ornithine + glyoxylate = 5-amino-2-oxopentanoate + glycine. The catalysed reaction is (2S)-2-aminobutanoate + glyoxylate = 2-oxobutanoate + glycine. The enzyme catalyses N(omega),N(omega)-dimethyl-L-arginine + oxaloacetate = 5-(3,3-dimethylguanidino)-2-oxopentanoate + L-aspartate. It carries out the reaction oxaloacetate + L-alanine = L-aspartate + pyruvate. It catalyses the reaction N(omega),N(omega)-dimethyl-L-arginine + 2-oxobutanoate = 5-(3,3-dimethylguanidino)-2-oxopentanoate + (2S)-2-aminobutanoate. The catalysed reaction is 2-oxopentanoate + N(omega),N(omega)-dimethyl-L-arginine = 5-(3,3-dimethylguanidino)-2-oxopentanoate + L-2-aminopentanoate. The enzyme catalyses 2-oxohexanoate + N(omega),N(omega)-dimethyl-L-arginine = L-2-aminohexanoate + 5-(3,3-dimethylguanidino)-2-oxopentanoate. Functionally, multifunctional aminotransferase with a broad substrate specificity. Catalyzes the conversion of glyoxylate to glycine using alanine as the amino donor. Catalyzes metabolism of not L- but the D-isomer of D-beta-aminoisobutyric acid to generate 2-methyl-3-oxopropanoate and alanine. Catalyzes the transfer of the amino group from beta-alanine to pyruvate to yield L-alanine and 3-oxopropanoate. Can metabolize NG-monomethyl-L-arginine (NMMA), asymmetric NG,NG-dimethyl-L-arginine (ADMA) and symmetric NG,N'G-dimethyl-L-arginine (SDMA). ADMA is a potent inhibitor of nitric-oxide (NO) synthase, and this activity provides mechanism through which the kidney regulates blood pressure. This Homo sapiens (Human) protein is Alanine--glyoxylate aminotransferase 2, mitochondrial (AGXT2).